Consider the following 306-residue polypeptide: Acetylglutamate kinase (306 aa).

Residues 68–69 (GG), R90, and N195 contribute to the substrate site.

It belongs to the acetylglutamate kinase family. ArgB subfamily.

The protein localises to the cytoplasm. The enzyme catalyses N-acetyl-L-glutamate + ATP = N-acetyl-L-glutamyl 5-phosphate + ADP. The protein operates within amino-acid biosynthesis; L-arginine biosynthesis; N(2)-acetyl-L-ornithine from L-glutamate: step 2/4. Its function is as follows. Catalyzes the ATP-dependent phosphorylation of N-acetyl-L-glutamate. This is Acetylglutamate kinase from Chromohalobacter salexigens (strain ATCC BAA-138 / DSM 3043 / CIP 106854 / NCIMB 13768 / 1H11).